A 670-amino-acid polypeptide reads, in one-letter code: Thrombospondin-type laminin G domain and EAR repeat-containing protein (670 aa).

A signal peptide spans 1-20 (MSALLMLCAVLLLLGTPSRG). In terms of domain architecture, Laminin G-like spans 59-278 (GLQFSATEPR…KVTLGSRPPC (220 aa)). EAR repeat units lie at residues 314–359 (DYVE…KWTD), 361–409 (KFVS…KWSP), 413–461 (KFTL…RWNP), 465–513 (LFEA…IWLV), 515–571 (AFQL…ELNI), 575–623 (TFVK…RWQG), and 626–669 (GFVA…KLRT). N-linked (GlcNAc...) asparagine glycosylation is present at asparagine 498.

In the organ of Corti, expression at postnatal day 1 (P1) is restricted to the basal region of the stereocilia of inner and outer hair cells (at protein level). Expressed in the organ of Corti at P1 and P7, in cochlear ganglion, stria vascularis and vestibular ends at P7, and in inferior colliculus, remaining brainstem, cerebellum, brain hemispheres and retina at P1, P7 and in the adult. Also detected in adult liver, lung, kidney, intestine and testis but not in heart or skeletal muscle.

It is found in the secreted. The protein resides in the cell surface. It localises to the cell projection. Its subcellular location is the stereocilium. In terms of biological role, plays a critical role in tooth and hair follicle morphogenesis through regulation of the Notch signaling pathway. May play a role in development or function of the auditory system. The chain is Thrombospondin-type laminin G domain and EAR repeat-containing protein from Mus musculus (Mouse).